Reading from the N-terminus, the 212-residue chain is Large ribosomal subunit protein bL25 (212 aa).

Positions 190–212 are disordered; sequence IAEAGDALAEPEVISKGSGEADE.

The protein belongs to the bacterial ribosomal protein bL25 family. CTC subfamily. In terms of assembly, part of the 50S ribosomal subunit; part of the 5S rRNA/L5/L18/L25 subcomplex. Contacts the 5S rRNA. Binds to the 5S rRNA independently of L5 and L18.

In terms of biological role, this is one of the proteins that binds to the 5S RNA in the ribosome where it forms part of the central protuberance. This Rhodopirellula baltica (strain DSM 10527 / NCIMB 13988 / SH1) protein is Large ribosomal subunit protein bL25.